A 202-amino-acid polypeptide reads, in one-letter code: Transmembrane gamma-carboxyglutamic acid protein 2 (202 aa).

A signal peptide spans Met1–Ser23. The propeptide occupies Glu24–Arg49. Residues Ala50 to Tyr96 enclose the Gla domain. Residues Ala50–Ser109 are Extracellular-facing. Cys67 and Cys72 are joined by a disulfide. Glu70 is subject to 4-carboxyglutamate. A helical membrane pass occupies residues Leu110–Trp130. The Cytoplasmic segment spans residues Tyr131–His202. The tract at residues Cys143–His202 is disordered. Positions Pro158–Leu175 are enriched in pro residues. The LPXY motif; mediates binding to WW domain-containing proteins motif lies at Leu175–Tyr178. The PPXY motif; mediates binding to WW domain-containing proteins signature appears at Pro192–Tyr195.

In terms of assembly, interacts with NEDD4. Interacts (via cytoplasmic domain) with transcriptional coactivator YAP1. Post-translationally, gamma-carboxyglutamate residues are formed by vitamin K dependent carboxylation. These residues are essential for the binding of calcium. As to expression, widely expressed with highest levels in kidney. Also highly expressed in the thyroid.

Its subcellular location is the cell membrane. In Homo sapiens (Human), this protein is Transmembrane gamma-carboxyglutamic acid protein 2.